We begin with the raw amino-acid sequence, 494 residues long: Glycerol kinase (494 aa).

Thr-13 is an ADP binding site. ATP-binding residues include Thr-13, Thr-14, and Ser-15. Position 13 (Thr-13) interacts with sn-glycerol 3-phosphate. ADP is bound at residue Arg-17. Positions 83, 84, 135, and 244 each coordinate sn-glycerol 3-phosphate. Glycerol contacts are provided by Arg-83, Glu-84, Tyr-135, Asp-244, and Gln-245. Thr-266 and Gly-309 together coordinate ADP. Thr-266, Gly-309, Gln-313, and Gly-410 together coordinate ATP. The ADP site is built by Gly-410 and Asn-414.

Belongs to the FGGY kinase family.

The enzyme catalyses glycerol + ATP = sn-glycerol 3-phosphate + ADP + H(+). Its pathway is polyol metabolism; glycerol degradation via glycerol kinase pathway; sn-glycerol 3-phosphate from glycerol: step 1/1. With respect to regulation, inhibited by fructose 1,6-bisphosphate (FBP). Its function is as follows. Key enzyme in the regulation of glycerol uptake and metabolism. Catalyzes the phosphorylation of glycerol to yield sn-glycerol 3-phosphate. This chain is Glycerol kinase, found in Shewanella sp. (strain ANA-3).